The chain runs to 255 residues: 5'-nucleotidase SurE (255 aa).

A divalent metal cation-binding residues include Asp-8, Asp-9, Ser-40, and Asn-93.

The protein belongs to the SurE nucleotidase family. It depends on a divalent metal cation as a cofactor.

It localises to the cytoplasm. It catalyses the reaction a ribonucleoside 5'-phosphate + H2O = a ribonucleoside + phosphate. Its function is as follows. Nucleotidase that shows phosphatase activity on nucleoside 5'-monophosphates. This Rhodopseudomonas palustris (strain BisB5) protein is 5'-nucleotidase SurE.